Consider the following 471-residue polypeptide: Arginine biosynthesis bifunctional protein ArgJ, mitochondrial (471 aa).

Substrate-binding residues include Thr-201, Lys-230, Thr-241, Glu-328, Asn-466, and Thr-471. Thr-241 functions as the Nucleophile in the catalytic mechanism.

This sequence belongs to the ArgJ family. In terms of assembly, heterodimer of an alpha and a beta chain. Post-translationally, the alpha and beta chains are autoproteolytically processed from a single precursor protein within the mitochondrion.

It is found in the mitochondrion matrix. It carries out the reaction N(2)-acetyl-L-ornithine + L-glutamate = N-acetyl-L-glutamate + L-ornithine. The catalysed reaction is L-glutamate + acetyl-CoA = N-acetyl-L-glutamate + CoA + H(+). Its pathway is amino-acid biosynthesis; L-arginine biosynthesis; L-ornithine and N-acetyl-L-glutamate from L-glutamate and N(2)-acetyl-L-ornithine (cyclic): step 1/1. It functions in the pathway amino-acid biosynthesis; L-arginine biosynthesis; N(2)-acetyl-L-ornithine from L-glutamate: step 1/4. Its function is as follows. Catalyzes two activities which are involved in the cyclic version of arginine biosynthesis: the synthesis of acetylglutamate from glutamate and acetyl-CoA, and of ornithine by transacetylation between acetylornithine and glutamate. The protein is Arginine biosynthesis bifunctional protein ArgJ, mitochondrial of Ajellomyces capsulatus (strain NAm1 / WU24) (Darling's disease fungus).